A 379-amino-acid chain; its full sequence is Cytokine receptor common subunit gamma (379 aa).

An N-terminal signal peptide occupies residues 1-22 (MLKPPLPLRSLLFLQLPLLGVG). The Extracellular portion of the chain corresponds to 23–269 (LNPKFLTPSG…ENIENPENPS (247 aa)). C68 and C78 are joined by a disulfide. Residues N77, N81, and N90 are each glycosylated (N-linked (GlcNAc...) asparagine). Cysteines 109 and 122 form a disulfide. One can recognise a Fibronectin type-III domain in the interval 163–260 (APENLTLRNL…IHWGSNTSKE (98 aa)). Residues N166 and N171 are each glycosylated (N-linked (GlcNAc...) asparagine). The WSXWS motif motif lies at 244 to 248 (WSDWS). Residues 270–290 (LFALEAVLIPLGSMGLIVSLI) traverse the membrane as a helical segment. The Cytoplasmic portion of the chain corresponds to 291–379 (CVYCWLERTM…PPCYTLKPEP (89 aa)). The Box 1 motif signature appears at 299–307 (TMPRIPTLK). T305 carries the phosphothreonine modification. The interval 349–370 (PPKGGEGPGGSPCSQHSPYWAP) is disordered.

The protein belongs to the type I cytokine receptor family. Type 5 subfamily. In terms of assembly, the gamma subunit is common to the IL2, IL4, IL7, IL15, IL21 and probably also the IL13 receptors. Interacts with SHB upon interleukin stimulation.

The protein localises to the cell membrane. It is found in the cell surface. In terms of biological role, common subunit for the receptors for a variety of interleukins. Probably in association with IL15RA, involved in the stimulation of neutrophil phagocytosis by IL15. The polypeptide is Cytokine receptor common subunit gamma (IL2RG) (Bos taurus (Bovine)).